A 446-amino-acid polypeptide reads, in one-letter code: tRNA-2-methylthio-N(6)-dimethylallyladenosine synthase (446 aa).

In terms of domain architecture, MTTase N-terminal spans 3–119 (KKIFIKTFGC…INEAILNHLK (117 aa)). Residues Cys12, Cys48, Cys82, Cys158, Cys162, and Cys165 each coordinate [4Fe-4S] cluster. Positions 144-374 (KDSKVSSFLT…QEKLFNNQIK (231 aa)) constitute a Radical SAM core domain. Residues 377–439 (KSLENKILNV…QNSLFGKLTE (63 aa)) form the TRAM domain.

The protein belongs to the methylthiotransferase family. MiaB subfamily. In terms of assembly, monomer. It depends on [4Fe-4S] cluster as a cofactor.

The protein resides in the cytoplasm. It carries out the reaction N(6)-dimethylallyladenosine(37) in tRNA + (sulfur carrier)-SH + AH2 + 2 S-adenosyl-L-methionine = 2-methylsulfanyl-N(6)-dimethylallyladenosine(37) in tRNA + (sulfur carrier)-H + 5'-deoxyadenosine + L-methionine + A + S-adenosyl-L-homocysteine + 2 H(+). Catalyzes the methylthiolation of N6-(dimethylallyl)adenosine (i(6)A), leading to the formation of 2-methylthio-N6-(dimethylallyl)adenosine (ms(2)i(6)A) at position 37 in tRNAs that read codons beginning with uridine. The polypeptide is tRNA-2-methylthio-N(6)-dimethylallyladenosine synthase (Pelagibacter ubique (strain HTCC1062)).